Consider the following 362-residue polypeptide: Flagellar P-ring protein (362 aa).

A signal peptide spans 1–15 (MLAAALMSAAFGAHA).

It belongs to the FlgI family. In terms of assembly, the basal body constitutes a major portion of the flagellar organelle and consists of four rings (L,P,S, and M) mounted on a central rod.

It is found in the periplasm. Its subcellular location is the bacterial flagellum basal body. In terms of biological role, assembles around the rod to form the L-ring and probably protects the motor/basal body from shearing forces during rotation. The polypeptide is Flagellar P-ring protein (Pseudomonas fluorescens (strain Pf0-1)).